Here is a 1292-residue protein sequence, read N- to C-terminus: Myosin-1 (1292 aa).

In terms of domain architecture, Myosin motor spans 35–714 (VGVSDLTLLS…TLFALENMRD (680 aa)). An ATP-binding site is contributed by 128–135 (GESGAGKT). Ser-356 is modified (phosphoserine). Positions 403–485 (SIGILDIYGF…PGIFAALNDS (83 aa)) are actin-binding. IQ domains are found at residues 718–738 (HNMA…RIDS) and 739–764 (AIRI…YGNK). The TH1 domain occupies 770-960 (KERRAMSLLG…TIMVRRGRPG (191 aa)). 3 disordered regions span residues 956 to 991 (RGRP…GHPT), 1017 to 1180 (YSLN…FPLK), and 1227 to 1258 (PVAS…SAAT). A compositionally biased stretch (polar residues) spans 1062–1081 (MDNSSAAYGNASALPNSAPS). Composition is skewed to pro residues over residues 1087–1121 (ASRP…PMPR) and 1142–1155 (APPP…PPAA). The 63-residue stretch at 1157–1219 (PSEPVYEAAF…PTAYIVESKA (63 aa)) folds into the SH3 domain. The span at 1240-1258 (ATREAGTTSAATAAASAAT) shows a compositional bias: low complexity.

Belongs to the TRAFAC class myosin-kinesin ATPase superfamily. Myosin family. Post-translationally, phosphorylation of the TEDS site (Ser-356) is required for the polarization of the actin cytoskeleton. Phosphorylation probably activates the myosin-I ATPase activity.

The protein resides in the cytoplasm. It localises to the cytoskeleton. It is found in the actin patch. In terms of biological role, type-I myosin implicated in the organization of the actin cytoskeleton. Required for proper actin cytoskeleton polarization. At the cell cortex, assembles in patch-like structures together with proteins from the actin-polymerizing machinery and promotes actin assembly. Functions as actin nucleation-promoting factor (NPF) for the Arp2/3 complex. The sequence is that of Myosin-1 (MYO1) from Eremothecium gossypii (strain ATCC 10895 / CBS 109.51 / FGSC 9923 / NRRL Y-1056) (Yeast).